The following is a 111-amino-acid chain: MAYQLYRNTTLGNSLQESLDELIQTQQITPQLALQVLLQFDKAINTALASRVRNRVNFRGSLNTYRFCDNVWTFVLNDVEFREVTDLVKVDKVKIVACDGKSESTQNKSDK.

Belongs to the TFIIA subunit 2 family. As to quaternary structure, TFIIA is a heterodimer of the large unprocessed subunit 1 and a small subunit gamma. It was originally believed to be a heterotrimer of an alpha, a beta and a gamma subunit. Interacts with NCOA6 general coactivator. TFIIA forms a complex with TBP.

It is found in the nucleus. Its function is as follows. TFIIA is a component of the transcription machinery of RNA polymerase II and plays an important role in transcriptional activation. TFIIA in a complex with TBP mediates transcriptional activity. The chain is Transcription initiation factor IIA subunit 2 (gtf2a2) from Paralichthys olivaceus (Bastard halibut).